A 90-amino-acid polypeptide reads, in one-letter code: Putative F-box protein At5g16285 (90 aa).

Positions 1-46 (MRIESLLQHDVVERILERLAVNSLPRFKAVSKQWKSTIESQFFQGK) constitute an F-box domain.

This chain is Putative F-box protein At5g16285, found in Arabidopsis thaliana (Mouse-ear cress).